The primary structure comprises 361 residues: Trans-enoyl reductase gkaC (361 aa).

One can recognise an Enoyl reductase (ER) domain in the interval 15–357 (EDVGSFEISR…RREISGKKMV (343 aa)). NADP(+) is bound by residues 48–51 (CDWK), 172–175 (SSAS), 195–198 (SPKN), Tyr-213, 260–261 (FE), and 351–352 (IS).

This sequence belongs to the zinc-containing alcohol dehydrogenase family. Monomer.

Its pathway is mycotoxin biosynthesis. Trans-enoyl reductasee; part of the gene cluster that mediates the biosynthesis of GKK1032, fungal natural products containing a macrocyclic para-cyclophane connected to a decahydrofluorene ring system that show potent antitumor activities. Within the pathway, the PKS-NRPS gkaA, with the help of the trans-enoyl reductase gkaC, synthesize the polyketide-tyrosyl acyl thioester product which can be reductively off-loaded by the terminal reductase (R) domain in gkaA. The PKS module of gkaA acts in combination with the trans-acting enoyl reductase gkaC to produce a methylated polyketide attached to the ACP domain. In parallel, the adenylation (A) domain of the NRPS module activated L-tyrosine, which is then transferred to the ACP domain. The condensation (C) domain subsequently links this group to the polyketide chain, forming an enzyme-bound amide. The alpha/beta hydrolase gkaG is then required to catalyze the subsequent Knoevenagel condensation that affords the 3-pyrrolin-2-one ring, whereas the three proteins gkaB, gkadX and gkaZ then function synergistically to form the cyclophane. This Penicillium citrinum protein is Trans-enoyl reductase gkaC.